A 217-amino-acid polypeptide reads, in one-letter code: Protein-L-isoaspartate O-methyltransferase (217 aa).

Ser-64 is a catalytic residue.

It belongs to the methyltransferase superfamily. L-isoaspartyl/D-aspartyl protein methyltransferase family.

It localises to the cytoplasm. The enzyme catalyses [protein]-L-isoaspartate + S-adenosyl-L-methionine = [protein]-L-isoaspartate alpha-methyl ester + S-adenosyl-L-homocysteine. Catalyzes the methyl esterification of L-isoaspartyl residues in peptides and proteins that result from spontaneous decomposition of normal L-aspartyl and L-asparaginyl residues. It plays a role in the repair and/or degradation of damaged proteins. This chain is Protein-L-isoaspartate O-methyltransferase, found in Nitrobacter winogradskyi (strain ATCC 25391 / DSM 10237 / CIP 104748 / NCIMB 11846 / Nb-255).